The chain runs to 454 residues: Bifunctional protein GlmU (454 aa).

Residues 1–233 (MQATPRPLAL…EAETIGINSR (233 aa)) are pyrophosphorylase. UDP-N-acetyl-alpha-D-glucosamine-binding positions include 13-16 (LAAG), Lys-27, Gln-80, 85-86 (GT), 108-110 (YGD), Gly-145, Glu-159, Asn-174, and Asn-231. Position 110 (Asp-110) interacts with Mg(2+). Position 231 (Asn-231) interacts with Mg(2+). Positions 234–254 (AELVRAEAQFQSQRRAALIEA) are linker. The interval 255-454 (GVTMQAPDSV…KAIKDAKSKD (200 aa)) is N-acetyltransferase. The UDP-N-acetyl-alpha-D-glucosamine site is built by Arg-320 and Lys-338. His-350 (proton acceptor) is an active-site residue. Positions 353 and 364 each coordinate UDP-N-acetyl-alpha-D-glucosamine. Residues Ala-367, 373-374 (NY), Ser-392, Ser-410, and Arg-427 each bind acetyl-CoA.

In the N-terminal section; belongs to the N-acetylglucosamine-1-phosphate uridyltransferase family. This sequence in the C-terminal section; belongs to the transferase hexapeptide repeat family. As to quaternary structure, homotrimer. The cofactor is Mg(2+).

Its subcellular location is the cytoplasm. The enzyme catalyses alpha-D-glucosamine 1-phosphate + acetyl-CoA = N-acetyl-alpha-D-glucosamine 1-phosphate + CoA + H(+). The catalysed reaction is N-acetyl-alpha-D-glucosamine 1-phosphate + UTP + H(+) = UDP-N-acetyl-alpha-D-glucosamine + diphosphate. Its pathway is nucleotide-sugar biosynthesis; UDP-N-acetyl-alpha-D-glucosamine biosynthesis; N-acetyl-alpha-D-glucosamine 1-phosphate from alpha-D-glucosamine 6-phosphate (route II): step 2/2. It participates in nucleotide-sugar biosynthesis; UDP-N-acetyl-alpha-D-glucosamine biosynthesis; UDP-N-acetyl-alpha-D-glucosamine from N-acetyl-alpha-D-glucosamine 1-phosphate: step 1/1. It functions in the pathway bacterial outer membrane biogenesis; LPS lipid A biosynthesis. Functionally, catalyzes the last two sequential reactions in the de novo biosynthetic pathway for UDP-N-acetylglucosamine (UDP-GlcNAc). The C-terminal domain catalyzes the transfer of acetyl group from acetyl coenzyme A to glucosamine-1-phosphate (GlcN-1-P) to produce N-acetylglucosamine-1-phosphate (GlcNAc-1-P), which is converted into UDP-GlcNAc by the transfer of uridine 5-monophosphate (from uridine 5-triphosphate), a reaction catalyzed by the N-terminal domain. The sequence is that of Bifunctional protein GlmU from Jannaschia sp. (strain CCS1).